Consider the following 101-residue polypeptide: Small ribosomal subunit protein uS14 (101 aa).

It belongs to the universal ribosomal protein uS14 family. In terms of assembly, part of the 30S ribosomal subunit. Contacts proteins S3 and S10.

Functionally, binds 16S rRNA, required for the assembly of 30S particles and may also be responsible for determining the conformation of the 16S rRNA at the A site. The chain is Small ribosomal subunit protein uS14 from Shewanella sp. (strain MR-4).